The following is a 150-amino-acid chain: Cytochrome c oxidase subunit 5A, mitochondrial (150 aa).

A mitochondrion-targeting transit peptide spans 1–41 (MLGAALRRCAVAATTWAGPRGLLHSSRTPGPAAAIQSVRCY). Positions 2–17 (LGAALRRCAVAATTWA) match the SIFI-degron motif. Residues Lys87 and Lys113 each carry the N6-acetyllysine modification. Position 141 is a phosphothreonine (Thr141).

It belongs to the cytochrome c oxidase subunit 5A family. As to quaternary structure, component of the cytochrome c oxidase (complex IV, CIV), a multisubunit enzyme composed of 14 subunits. The complex is composed of a catalytic core of 3 subunits MT-CO1, MT-CO2 and MT-CO3, encoded in the mitochondrial DNA, and 11 supernumerary subunits COX4I, COX5A, COX5B, COX6A, COX6B, COX6C, COX7A, COX7B, COX7C, COX8 and NDUFA4, which are encoded in the nuclear genome. The complex exists as a monomer or a dimer and forms supercomplexes (SCs) in the inner mitochondrial membrane with NADH-ubiquinone oxidoreductase (complex I, CI) and ubiquinol-cytochrome c oxidoreductase (cytochrome b-c1 complex, complex III, CIII), resulting in different assemblies (supercomplex SCI(1)III(2)IV(1) and megacomplex MCI(2)III(2)IV(2)). Interacts with AFG1L. Interacts with RAB5IF. In terms of processing, in response to mitochondrial stress, the precursor protein is ubiquitinated by the SIFI complex in the cytoplasm before mitochondrial import, leading to its degradation. Within the SIFI complex, UBR4 initiates ubiquitin chain that are further elongated or branched by KCMF1.

It is found in the mitochondrion inner membrane. It participates in energy metabolism; oxidative phosphorylation. Component of the cytochrome c oxidase, the last enzyme in the mitochondrial electron transport chain which drives oxidative phosphorylation. The respiratory chain contains 3 multisubunit complexes succinate dehydrogenase (complex II, CII), ubiquinol-cytochrome c oxidoreductase (cytochrome b-c1 complex, complex III, CIII) and cytochrome c oxidase (complex IV, CIV), that cooperate to transfer electrons derived from NADH and succinate to molecular oxygen, creating an electrochemical gradient over the inner membrane that drives transmembrane transport and the ATP synthase. Cytochrome c oxidase is the component of the respiratory chain that catalyzes the reduction of oxygen to water. Electrons originating from reduced cytochrome c in the intermembrane space (IMS) are transferred via the dinuclear copper A center (CU(A)) of subunit 2 and heme A of subunit 1 to the active site in subunit 1, a binuclear center (BNC) formed by heme A3 and copper B (CU(B)). The BNC reduces molecular oxygen to 2 water molecules using 4 electrons from cytochrome c in the IMS and 4 protons from the mitochondrial matrix. The chain is Cytochrome c oxidase subunit 5A, mitochondrial (COX5A) from Colobus guereza (Mantled guereza).